The following is a 450-amino-acid chain: MTQTLHIVGGGMAGSEAAWQAAEMGVDVVLHEMRPKVGTFAHQTGLLGEMVCSNSFRSDDDEQNAVGLLHWEMRAAGGLIMRMADKHRLPAGGALAVDRDLFAQSVTDTLTAHPRITIEYGEISELPASGQWIFATGPLTSSKLSDAIAAQTGGAALAFFDAIAPIVYFDSIDMSRAWMQSRYDKGETEEERTAYLNCPMDKDQYEAFIDALLAADKTEFKEGETADYFDGCLPIEVMAERGRETLRFGPMKPVGLTNPHQPDVKPYAVVQLRRDNKLGTLYNIVGFQTKMKYGAQAAVFKTIPGLENASFARLGGIHRNTFLNAPTLLDEQMRLRSRPNIRFAGQITGVEGYVESAAMGLLAGRLAAAEILGISLSAPADTTATGALITHISGGAEAKTFQPMNVNFGLFPPVEGLKGGRRGRKDRYKAYTDRAKRDWQNWLEAVKEPA.

FAD is bound at residue 9 to 14 (GGGMAG).

The protein belongs to the MnmG family. TrmFO subfamily. Requires FAD as cofactor.

It is found in the cytoplasm. It carries out the reaction uridine(54) in tRNA + (6R)-5,10-methylene-5,6,7,8-tetrahydrofolate + NADH + H(+) = 5-methyluridine(54) in tRNA + (6S)-5,6,7,8-tetrahydrofolate + NAD(+). The enzyme catalyses uridine(54) in tRNA + (6R)-5,10-methylene-5,6,7,8-tetrahydrofolate + NADPH + H(+) = 5-methyluridine(54) in tRNA + (6S)-5,6,7,8-tetrahydrofolate + NADP(+). In terms of biological role, catalyzes the folate-dependent formation of 5-methyl-uridine at position 54 (M-5-U54) in all tRNAs. The protein is Methylenetetrahydrofolate--tRNA-(uracil-5-)-methyltransferase TrmFO of Roseobacter denitrificans (strain ATCC 33942 / OCh 114) (Erythrobacter sp. (strain OCh 114)).